The primary structure comprises 64 residues: Large ribosomal subunit protein uL30 (64 aa).

The protein belongs to the universal ribosomal protein uL30 family. In terms of assembly, part of the 50S ribosomal subunit.

The protein is Large ribosomal subunit protein uL30 of Rhodopseudomonas palustris (strain HaA2).